The following is a 481-amino-acid chain: MQWEVVIGLEIHTQLSTQSKIFSGSATTFGSEPNTQASLVDLGMPGVLPVLNKEAVRMAVKFGLAVDAEIGQHNVFARKNYFYPDLPKGYQISQMELPIVGKGHLDITLEDGTVKRIGITRAHLEEDAGKSLHEDFQGMTGIDLNRAGTPLLEIVSEPDMRSAKEAVAYVKAIHAIVRYLGICDGNMAEGSLRCDCNVSIRPKGQVEFGTRCEIKNVNSFRFIEKAINSEIQRQIDLIEDGGKVIQQTRLYDPNTNETRAMRSKEEANDYRYFPDPDLLPVIIEDSFLEETRATLPELPPQKRERFQSQFGLSTYDASVLASSREQADYFEQVVSISGDAKLAANWVMVELGSLLNKQGLEIEQSPVSAEQLGGMLKRITDNTISGKIAKMVFEAMANGEGSADEVIDKRGLKQVTDSGAIESMLDEMLAANAEQVEQYRAADEAKRGKMFGFFVGQAMKASKGKANPQQVNELLKAKLEG.

It belongs to the GatB/GatE family. GatB subfamily. Heterotrimer of A, B and C subunits.

The enzyme catalyses L-glutamyl-tRNA(Gln) + L-glutamine + ATP + H2O = L-glutaminyl-tRNA(Gln) + L-glutamate + ADP + phosphate + H(+). It catalyses the reaction L-aspartyl-tRNA(Asn) + L-glutamine + ATP + H2O = L-asparaginyl-tRNA(Asn) + L-glutamate + ADP + phosphate + 2 H(+). Allows the formation of correctly charged Asn-tRNA(Asn) or Gln-tRNA(Gln) through the transamidation of misacylated Asp-tRNA(Asn) or Glu-tRNA(Gln) in organisms which lack either or both of asparaginyl-tRNA or glutaminyl-tRNA synthetases. The reaction takes place in the presence of glutamine and ATP through an activated phospho-Asp-tRNA(Asn) or phospho-Glu-tRNA(Gln). This chain is Aspartyl/glutamyl-tRNA(Asn/Gln) amidotransferase subunit B, found in Pseudomonas savastanoi pv. phaseolicola (strain 1448A / Race 6) (Pseudomonas syringae pv. phaseolicola (strain 1448A / Race 6)).